A 456-amino-acid chain; its full sequence is Histidine--tRNA ligase (456 aa).

The protein belongs to the class-II aminoacyl-tRNA synthetase family. As to quaternary structure, homodimer.

It is found in the cytoplasm. The catalysed reaction is tRNA(His) + L-histidine + ATP = L-histidyl-tRNA(His) + AMP + diphosphate + H(+). The chain is Histidine--tRNA ligase from Borrelia garinii subsp. bavariensis (strain ATCC BAA-2496 / DSM 23469 / PBi) (Borreliella bavariensis).